The primary structure comprises 123 residues: Galanin peptides (123 aa).

The N-terminal stretch at 1–19 (MARGSALLLASLLLAAALS) is a signal peptide. The propeptide occupies 20-30 (ASAGLWSPAKE). The tract at residues 46-80 (HAVGNHRSFSDKNGLTSKRELRPEDDMKPGSFDRS) is disordered. The segment covering 62–73 (SKRELRPEDDMK) has biased composition (basic and acidic residues). Phosphoserine occurs at positions 116 and 117.

Belongs to the galanin family.

It localises to the secreted. Its function is as follows. Endocrine hormone of the central and peripheral nervous systems that binds and activates the G protein-coupled receptors GALR1, GALR2, and GALR3. This small neuropeptide may regulate diverse physiologic functions including contraction of smooth muscle of the gastrointestinal and genitourinary tract, growth hormone and insulin release and adrenal secretion. The sequence is that of Galanin peptides (GAL) from Homo sapiens (Human).